The following is a 122-amino-acid chain: Large ribosomal subunit protein uL14 (122 aa).

It belongs to the universal ribosomal protein uL14 family. As to quaternary structure, part of the 50S ribosomal subunit. Forms a cluster with proteins L3 and L19. In the 70S ribosome, L14 and L19 interact and together make contacts with the 16S rRNA in bridges B5 and B8.

Its function is as follows. Binds to 23S rRNA. Forms part of two intersubunit bridges in the 70S ribosome. The sequence is that of Large ribosomal subunit protein uL14 from Dechloromonas aromatica (strain RCB).